Reading from the N-terminus, the 862-residue chain is DNA mismatch repair protein MutS (862 aa).

608–615 is a binding site for ATP; it reads GPNMAGKS.

It belongs to the DNA mismatch repair MutS family.

Its function is as follows. This protein is involved in the repair of mismatches in DNA. It is possible that it carries out the mismatch recognition step. This protein has a weak ATPase activity. The sequence is that of DNA mismatch repair protein MutS from Bacteroides fragilis (strain YCH46).